A 227-amino-acid polypeptide reads, in one-letter code: Cytochrome c oxidase subunit 2 (227 aa).

The Mitochondrial intermembrane portion of the chain corresponds to 1 to 14; sequence MAYPFQLGLQDATS. The chain crosses the membrane as a helical span at residues 15 to 45; that stretch reads PIMEELTNFHDHTLMIVFLISSLVLYIISLM. Over 46–59 the chain is Mitochondrial matrix; sequence LTTKLTHTSTMDAQ. The helical transmembrane segment at 60-87 threads the bilayer; the sequence is EVETIWTILPAAILVLIALPSLRILYMM. The Mitochondrial intermembrane segment spans residues 88 to 227; it reads DEINNPVLTV…HFENWSASMV (140 aa). Positions 161, 196, 198, 200, 204, and 207 each coordinate Cu cation. Mg(2+) is bound at residue E198.

It belongs to the cytochrome c oxidase subunit 2 family. As to quaternary structure, component of the cytochrome c oxidase (complex IV, CIV), a multisubunit enzyme composed of 14 subunits. The complex is composed of a catalytic core of 3 subunits MT-CO1, MT-CO2 and MT-CO3, encoded in the mitochondrial DNA, and 11 supernumerary subunits COX4I, COX5A, COX5B, COX6A, COX6B, COX6C, COX7A, COX7B, COX7C, COX8 and NDUFA4, which are encoded in the nuclear genome. The complex exists as a monomer or a dimer and forms supercomplexes (SCs) in the inner mitochondrial membrane with NADH-ubiquinone oxidoreductase (complex I, CI) and ubiquinol-cytochrome c oxidoreductase (cytochrome b-c1 complex, complex III, CIII), resulting in different assemblies (supercomplex SCI(1)III(2)IV(1) and megacomplex MCI(2)III(2)IV(2)). Found in a complex with TMEM177, COA6, COX18, COX20, SCO1 and SCO2. Interacts with TMEM177 in a COX20-dependent manner. Interacts with COX20. Interacts with COX16. Cu cation is required as a cofactor.

Its subcellular location is the mitochondrion inner membrane. It carries out the reaction 4 Fe(II)-[cytochrome c] + O2 + 8 H(+)(in) = 4 Fe(III)-[cytochrome c] + 2 H2O + 4 H(+)(out). Component of the cytochrome c oxidase, the last enzyme in the mitochondrial electron transport chain which drives oxidative phosphorylation. The respiratory chain contains 3 multisubunit complexes succinate dehydrogenase (complex II, CII), ubiquinol-cytochrome c oxidoreductase (cytochrome b-c1 complex, complex III, CIII) and cytochrome c oxidase (complex IV, CIV), that cooperate to transfer electrons derived from NADH and succinate to molecular oxygen, creating an electrochemical gradient over the inner membrane that drives transmembrane transport and the ATP synthase. Cytochrome c oxidase is the component of the respiratory chain that catalyzes the reduction of oxygen to water. Electrons originating from reduced cytochrome c in the intermembrane space (IMS) are transferred via the dinuclear copper A center (CU(A)) of subunit 2 and heme A of subunit 1 to the active site in subunit 1, a binuclear center (BNC) formed by heme A3 and copper B (CU(B)). The BNC reduces molecular oxygen to 2 water molecules using 4 electrons from cytochrome c in the IMS and 4 protons from the mitochondrial matrix. This Uromys caudimaculatus (Giant white-tailed rat) protein is Cytochrome c oxidase subunit 2 (MT-CO2).